Reading from the N-terminus, the 102-residue chain is ATP-dependent Clp protease adapter protein ClpS (102 aa).

This sequence belongs to the ClpS family. Binds to the N-terminal domain of the chaperone ClpA.

Its function is as follows. Involved in the modulation of the specificity of the ClpAP-mediated ATP-dependent protein degradation. The chain is ATP-dependent Clp protease adapter protein ClpS from Shewanella halifaxensis (strain HAW-EB4).